The following is a 472-amino-acid chain: Homeobox protein PKNOX2 (472 aa).

The segment at 1 to 62 (MMQHASPAPA…STPVPSAPID (62 aa)) is disordered. Residues 26–38 (DSPQMTATAQPPS) are compositionally biased toward polar residues. A compositionally biased stretch (low complexity) spans 46–56 (SAPSAAASTPV). Positions 96–179 (GSECITSASF…MHSDNLLRND (84 aa)) constitute an MEIS N-terminal domain. A DNA-binding region (homeobox) is located at residues 291–350 (KRGVLPKHATNIMRSWLFQHLMHPYPTEDEKRQIAAQTNLTLLQVNNWFINARRRILQPM). Disordered stretches follow at residues 351 to 371 (LDAS…QHRP), 386 to 405 (QQQG…LDNL), and 422 to 472 (MAAH…DSLE). Residues 361 to 371 (KAKKIKSQHRP) show a composition bias toward basic residues. A compositionally biased stretch (acidic residues) spans 429–454 (LDGTEEEDEDEMEEEEEEELEEEVDE).

Belongs to the TALE/MEIS homeobox family.

It is found in the nucleus. This chain is Homeobox protein PKNOX2 (PKNOX2), found in Homo sapiens (Human).